Reading from the N-terminus, the 564-residue chain is Beta-hexosaminidase subunit B2 (564 aa).

A signal peptide spans 1–19 (MKLKFIFLILFFIIGNSIG). N43, N84, N303, and N347 each carry an N-linked (GlcNAc...) asparagine glycan. Catalysis depends on E357, which acts as the Proton donor. N-linked (GlcNAc...) asparagine glycosylation is found at N364, N377, N439, N524, and N551.

Belongs to the glycosyl hydrolase 20 family.

It localises to the lysosome. The catalysed reaction is Hydrolysis of terminal non-reducing N-acetyl-D-hexosamine residues in N-acetyl-beta-D-hexosaminides.. In terms of biological role, responsible for the degradation of GM2 gangliosides, and a variety of other molecules containing terminal N-acetyl hexosamines. This is Beta-hexosaminidase subunit B2 (hexb2) from Dictyostelium discoideum (Social amoeba).